Reading from the N-terminus, the 346-residue chain is fMet-Leu-Phe receptor (346 aa).

2 N-linked (GlcNAc...) asparagine glycosylation sites follow: asparagine 1 and asparagine 7. At 1 to 24 the chain is on the extracellular side; that stretch reads NSSLPTNISGGTPAVSAGYLFLDI. A helical transmembrane segment spans residues 25–47; the sequence is VTYLVFAVTFVLGVLGNGLVIWV. Over 48–58 the chain is Cytoplasmic; that stretch reads AGFRMTHTVTT. Residues 59–80 traverse the membrane as a helical segment; the sequence is ISYLNLAVADFCFTSTLPFFMV. The Extracellular portion of the chain corresponds to 81–97; it reads KKAMGGHWPFGWFLCKF. Residues cysteine 95 and cysteine 173 are joined by a disulfide bond. Residues 98–118 form a helical membrane-spanning segment; that stretch reads IFTIVDINLFGSVFLIALIAL. The Cytoplasmic segment spans residues 119-137; that stretch reads DRCVCVLHPVWTQNHRTVS. Residues 138–159 traverse the membrane as a helical segment; the sequence is LAKKVIIGPWVMALLLTLPVII. The Extracellular portion of the chain corresponds to 160 to 202; the sequence is RVTTVPGKMGTVACTFNFSPWTNDPKERIKVAVAMLTVRGIIR. The helical transmembrane segment at 203-223 threads the bilayer; that stretch reads FIIGFSAPMSIVAVSYGLIAT. Residues 224–239 are Cytoplasmic-facing; it reads KIDKQGLIKSSRTLRV. A helical membrane pass occupies residues 240-263; the sequence is LSFVAAAFFLSWSPYQVVALIATV. Topologically, residues 264 to 282 are extracellular; it reads RIRELLQGMYKEIGIAVDV. The helical transmembrane segment at 283 to 302 threads the bilayer; it reads TSALAFFNSCLNPMLYVFMG. The Cytoplasmic segment spans residues 303–346; sequence QDFRERLIHALPASLERALTEDSTQTSDTATNSTLPSAEVALQA. The interval 322-346 is disordered; it reads TEDSTQTSDTATNSTLPSAEVALQA. The segment covering 323–338 has biased composition (polar residues); sequence EDSTQTSDTATNSTLP.

This sequence belongs to the G-protein coupled receptor 1 family. In terms of processing, phosphorylated; which is necessary for desensitization.

The protein resides in the cell membrane. High affinity receptor for N-formyl-methionyl peptides (fMLP), which are powerful neutrophil chemotactic factors. Binding of fMLP to the receptor stimulates intracellular calcium mobilization and superoxide anion release. This response is mediated via a G-protein that activates a phosphatidylinositol-calcium second messenger system. Receptor for TAFA4, mediates its effects on chemoattracting macrophages, promoting phagocytosis and increasing ROS release. Receptor for cathepsin CTSG, leading to increased phagocyte chemotaxis. This is fMet-Leu-Phe receptor (FPR1) from Gorilla gorilla gorilla (Western lowland gorilla).